A 328-amino-acid chain; its full sequence is L-lactate dehydrogenase (328 aa).

Residues Val18, Glu39, Lys46, Tyr71, and 85-86 contribute to the NAD(+) site; that span reads GA. Gln88 and Arg94 together coordinate substrate. NAD(+) is bound by residues Ser107, 124 to 126, and Ser149; that span reads AAN. Substrate is bound at residue 126–129; sequence NPVD. Residue 154–157 participates in substrate binding; sequence DTAR. Arg159 and His174 together coordinate beta-D-fructose 1,6-bisphosphate. Residue His181 is the Proton acceptor of the active site. Tyr226 carries the phosphotyrosine modification. Residue Thr235 participates in substrate binding.

It belongs to the LDH/MDH superfamily. LDH family. Homotetramer.

The protein resides in the cytoplasm. It catalyses the reaction (S)-lactate + NAD(+) = pyruvate + NADH + H(+). It functions in the pathway fermentation; pyruvate fermentation to lactate; (S)-lactate from pyruvate: step 1/1. With respect to regulation, allosterically activated by fructose 1,6-bisphosphate (FBP). Functionally, catalyzes the conversion of lactate to pyruvate. This is L-lactate dehydrogenase from Streptococcus mutans serotype c (strain ATCC 700610 / UA159).